The chain runs to 308 residues: SAP30-binding protein (308 aa).

The segment at 15–101 (AEDSEPESDG…EAEKRDPQEL (87 aa)) is disordered. A compositionally biased stretch (acidic residues) spans 16–26 (EDSEPESDGEA). Phosphoserine occurs at positions 18, 22, 43, and 52. The segment covering 57–78 (DEDGYEEEEDENSRQSEDDDSE) has biased composition (acidic residues). The segment covering 79-99 (TEKPEADDPKDNTEAEKRDPQ) has biased composition (basic and acidic residues). K95 is covalently cross-linked (Glycyl lysine isopeptide (Lys-Gly) (interchain with G-Cter in SUMO2)). The residue at position 113 (S113) is a Phosphoserine. Residues K220, K304, and K305 each participate in a glycyl lysine isopeptide (Lys-Gly) (interchain with G-Cter in SUMO2) cross-link.

Belongs to the HCNGP family. In terms of assembly, interacts with histone deacetylase complex subunit SAP30.

It is found in the nucleus. Plays a role in transcriptional repression by promoting histone deacetylase activity, leading to deacetylation of histone H3. May be involved in the regulation of beta-2-microglobulin genes. Its function is as follows. (Microbial infection) Involved in transcriptional repression of HHV-1 genes TK and gC. In Homo sapiens (Human), this protein is SAP30-binding protein.